The following is a 201-amino-acid chain: Recombination protein RecR (201 aa).

Residues 55–70 (CVCCGAFCEGRTCALC) form a C4-type zinc finger. In terms of domain architecture, Toprim spans 78–173 (GIICVVERAQ…IVTRLASGIP (96 aa)).

It belongs to the RecR family.

In terms of biological role, may play a role in DNA repair. It seems to be involved in an RecBC-independent recombinational process of DNA repair. It may act with RecF and RecO. The protein is Recombination protein RecR of Treponema pallidum (strain Nichols).